We begin with the raw amino-acid sequence, 1588 residues long: Autotransporter adhesin EhaG (1588 aa).

Positions 1-53 are cleaved as a signal peptide; that stretch reads MNKIFKVIWNPATGNYTVTSETAKSRGKKSGRSKLLISALVAGGMLSSFGALA. Residues 54–1499 form a surface exposed passenger domain region; it reads NAGNDNGQGV…QETKQYTDQR (1446 aa). The tract at residues 1500 to 1588 is translocator domain; the sequence is MVEMDNKLSK…SAALGAGIQW (89 aa). The next 4 beta stranded transmembrane spans lie at 1534–1544, 1548–1558, 1567–1573, and 1577–1588; these read GASMASIGGGT, ESAVALGVSMV, KLQGSTN, and EYSAALGAGIQW.

It belongs to the autotransporter-2 (AT-2) (TC 1.B.40) family. Homotrimer.

The protein resides in the cell surface. It localises to the cell outer membrane. Mediates aggregation, biofilm formation and adhesion to a range of extracellular matrix (ECM) proteins, such as fibronectin, fibrinogen, laminin and collagen types I, II, III, and V. Mediates adhesion to intestinal epithelial cells. This chain is Autotransporter adhesin EhaG, found in Escherichia coli O157:H7.